A 289-amino-acid chain; its full sequence is Diaminopimelate epimerase (289 aa).

Substrate contacts are provided by Asn-13, Gln-47, and Asn-67. Cys-76 serves as the catalytic Proton donor. Substrate-binding positions include 77-78, Asn-167, Asn-200, and 218-219; these read GN and ER. Residue Cys-227 is the Proton acceptor of the active site. Substrate is bound at residue 228–229; it reads GT.

Belongs to the diaminopimelate epimerase family. As to quaternary structure, homodimer.

Its subcellular location is the cytoplasm. The enzyme catalyses (2S,6S)-2,6-diaminopimelate = meso-2,6-diaminopimelate. It functions in the pathway amino-acid biosynthesis; L-lysine biosynthesis via DAP pathway; DL-2,6-diaminopimelate from LL-2,6-diaminopimelate: step 1/1. In terms of biological role, catalyzes the stereoinversion of LL-2,6-diaminopimelate (L,L-DAP) to meso-diaminopimelate (meso-DAP), a precursor of L-lysine and an essential component of the bacterial peptidoglycan. The sequence is that of Diaminopimelate epimerase from Burkholderia pseudomallei (strain K96243).